A 356-amino-acid polypeptide reads, in one-letter code: UDP-3-O-acylglucosamine N-acyltransferase (356 aa).

Residue His242 is the Proton acceptor of the active site.

The protein belongs to the transferase hexapeptide repeat family. LpxD subfamily. In terms of assembly, homotrimer.

It carries out the reaction a UDP-3-O-[(3R)-3-hydroxyacyl]-alpha-D-glucosamine + a (3R)-hydroxyacyl-[ACP] = a UDP-2-N,3-O-bis[(3R)-3-hydroxyacyl]-alpha-D-glucosamine + holo-[ACP] + H(+). Its pathway is bacterial outer membrane biogenesis; LPS lipid A biosynthesis. Functionally, catalyzes the N-acylation of UDP-3-O-acylglucosamine using 3-hydroxyacyl-ACP as the acyl donor. Is involved in the biosynthesis of lipid A, a phosphorylated glycolipid that anchors the lipopolysaccharide to the outer membrane of the cell. The chain is UDP-3-O-acylglucosamine N-acyltransferase from Acinetobacter baumannii (strain AB307-0294).